A 362-amino-acid chain; its full sequence is 3-dehydroquinate synthase (362 aa).

Residues Glu-70–Lys-75, Gly-104–Asp-108, Thr-128–Thr-129, Lys-141, Lys-150, and Thr-168–Thr-171 each bind NAD(+). Glu-183, His-246, and His-263 together coordinate Zn(2+).

It belongs to the sugar phosphate cyclases superfamily. Dehydroquinate synthase family. Requires Co(2+) as cofactor. The cofactor is Zn(2+). NAD(+) serves as cofactor.

Its subcellular location is the cytoplasm. The catalysed reaction is 7-phospho-2-dehydro-3-deoxy-D-arabino-heptonate = 3-dehydroquinate + phosphate. Its pathway is metabolic intermediate biosynthesis; chorismate biosynthesis; chorismate from D-erythrose 4-phosphate and phosphoenolpyruvate: step 2/7. Its function is as follows. Catalyzes the conversion of 3-deoxy-D-arabino-heptulosonate 7-phosphate (DAHP) to dehydroquinate (DHQ). This Histophilus somni (strain 129Pt) (Haemophilus somnus) protein is 3-dehydroquinate synthase.